A 217-amino-acid chain; its full sequence is Putative oxidative stress regulator AosR (217 aa).

The CXXXC motif lies at Cys-5 to Cys-9. Cys-5 and Cys-9 are joined by a disulfide.

It belongs to the AosR family.

The sequence is that of Putative oxidative stress regulator AosR from Mycobacterium leprae (strain TN).